The primary structure comprises 250 residues: Petrobactin import ATP-binding protein FatE (250 aa).

Residues 2-236 form the ABC transporter domain; it reads IKIDNVKKFY…TLLTDIFETR (235 aa). 34–41 is an ATP binding site; the sequence is GPNGAGKS.

This sequence belongs to the ABC transporter superfamily. The complex is composed of two ATP-binding proteins (FatE), two transmembrane proteins (FatC and FatD) and a solute-binding protein (FpuA).

It is found in the cell membrane. It carries out the reaction a Fe(III)-siderophore(out) + ATP + H2O = a Fe(III)-siderophore(in) + ADP + phosphate + H(+). Part of an ABC transporter complex involved in ferric-petrobactin uptake. Probably responsible for energy coupling to the transport system. The chain is Petrobactin import ATP-binding protein FatE from Bacillus anthracis.